Consider the following 232-residue polypeptide: Glycerol-3-phosphate acyltransferase 4 (232 aa).

6 helical membrane passes run 4-24 (VFLIMIPAGYLVGAIPMAYLL), 54-76 (LGLAVFVFDVSKGAIIILLAGWL), 80-99 (LWQQIVVGLLTIAGHNWPVF), 107-127 (GIATSLGVALVMAPVPALIAL), 143-163 (VFLGVGALPVMSGYFHGFFGV), and 168-188 (TVTWGFAGLFLIMIVRRLMAP).

This sequence belongs to the PlsY family. Probably interacts with PlsX.

The protein resides in the cell membrane. It carries out the reaction an acyl phosphate + sn-glycerol 3-phosphate = a 1-acyl-sn-glycero-3-phosphate + phosphate. The protein operates within lipid metabolism; phospholipid metabolism. Its function is as follows. Catalyzes the transfer of an acyl group from acyl-phosphate (acyl-PO(4)) to glycerol-3-phosphate (G3P) to form lysophosphatidic acid (LPA). This enzyme utilizes acyl-phosphate as fatty acyl donor, but not acyl-CoA or acyl-ACP. The chain is Glycerol-3-phosphate acyltransferase 4 from Dehalococcoides mccartyi (strain CBDB1).